A 291-amino-acid chain; its full sequence is Formamidopyrimidine-DNA glycosylase (291 aa).

Proline 2 (schiff-base intermediate with DNA) is an active-site residue. Glutamate 3 (proton donor) is an active-site residue. Catalysis depends on lysine 60, which acts as the Proton donor; for beta-elimination activity. DNA contacts are provided by histidine 108 and arginine 127. Residues 257–291 form an FPG-type zinc finger; it reads WVYRRGGQACRICSTPIRRESLCGRGTHWCPNCQR. Arginine 281 functions as the Proton donor; for delta-elimination activity in the catalytic mechanism.

It belongs to the FPG family. Monomer. Zn(2+) serves as cofactor.

The catalysed reaction is Hydrolysis of DNA containing ring-opened 7-methylguanine residues, releasing 2,6-diamino-4-hydroxy-5-(N-methyl)formamidopyrimidine.. It catalyses the reaction 2'-deoxyribonucleotide-(2'-deoxyribose 5'-phosphate)-2'-deoxyribonucleotide-DNA = a 3'-end 2'-deoxyribonucleotide-(2,3-dehydro-2,3-deoxyribose 5'-phosphate)-DNA + a 5'-end 5'-phospho-2'-deoxyribonucleoside-DNA + H(+). Its function is as follows. Involved in base excision repair of DNA damaged by oxidation or by mutagenic agents. Acts as a DNA glycosylase that recognizes and removes damaged bases. Has a preference for oxidized purines, such as 7,8-dihydro-8-oxoguanine (8-oxoG). Has AP (apurinic/apyrimidinic) lyase activity and introduces nicks in the DNA strand. Cleaves the DNA backbone by beta-delta elimination to generate a single-strand break at the site of the removed base with both 3'- and 5'-phosphates. The sequence is that of Formamidopyrimidine-DNA glycosylase from Prochlorococcus marinus (strain MIT 9313).